The chain runs to 341 residues: MTDIVYDKDADLSLIQGRKVAVIGYGSQGHAHALNLRDSGVEVVIGLKEGSTSRAKAEEQGFTVKTPSDASAWADVIVILAPDQHQRGLYADSVRDNLTEGKTLVFAHGFNIRFGYIEAPEGVDVVLVAPKGPGHTVRREFEAGRGVPVIVAVEVDASGKAWDLAWSYAKGIGGLRAGGIRTTFTEETETDLFGEQAVLCGGTSQLVQYGFETLIEAGYQPQIAYFEVLHELKLIVDLMWEGGIAKQRWSISDTAEYGDYVSGPRVISPDVKENMKAVLADIQSGAFADRFIKDQDAGAPEFLELRKKGEEHPIESTGRELRKLFAWNKADDDYTDGSVAR.

The 181-residue stretch at threonine 2–threonine 182 folds into the KARI N-terminal Rossmann domain. NADP(+) is bound by residues tyrosine 25–glutamine 28, lysine 48, serine 51, serine 53, and aspartate 83–glutamine 86. Residue histidine 108 is part of the active site. Residue glycine 134 participates in NADP(+) binding. In terms of domain architecture, KARI C-terminal knotted spans threonine 183–asparagine 328. Aspartate 191, glutamate 195, glutamate 227, and glutamate 231 together coordinate Mg(2+). Serine 252 serves as a coordination point for substrate.

This sequence belongs to the ketol-acid reductoisomerase family. Mg(2+) serves as cofactor.

It catalyses the reaction (2R)-2,3-dihydroxy-3-methylbutanoate + NADP(+) = (2S)-2-acetolactate + NADPH + H(+). It carries out the reaction (2R,3R)-2,3-dihydroxy-3-methylpentanoate + NADP(+) = (S)-2-ethyl-2-hydroxy-3-oxobutanoate + NADPH + H(+). It participates in amino-acid biosynthesis; L-isoleucine biosynthesis; L-isoleucine from 2-oxobutanoate: step 2/4. It functions in the pathway amino-acid biosynthesis; L-valine biosynthesis; L-valine from pyruvate: step 2/4. Its function is as follows. Involved in the biosynthesis of branched-chain amino acids (BCAA). Catalyzes an alkyl-migration followed by a ketol-acid reduction of (S)-2-acetolactate (S2AL) to yield (R)-2,3-dihydroxy-isovalerate. In the isomerase reaction, S2AL is rearranged via a Mg-dependent methyl migration to produce 3-hydroxy-3-methyl-2-ketobutyrate (HMKB). In the reductase reaction, this 2-ketoacid undergoes a metal-dependent reduction by NADPH to yield (R)-2,3-dihydroxy-isovalerate. This Clavibacter sepedonicus (Clavibacter michiganensis subsp. sepedonicus) protein is Ketol-acid reductoisomerase (NADP(+)).